Reading from the N-terminus, the 169-residue chain is Phosphopantetheine adenylyltransferase (169 aa).

Threonine 13 provides a ligand contact to substrate. Residues 13–14 (TF) and histidine 21 contribute to the ATP site. 3 residues coordinate substrate: lysine 45, leucine 82, and arginine 96. Residues 97–99 (GLR), glutamate 107, and 132–138 (HQFISSR) each bind ATP.

It belongs to the bacterial CoaD family. Homohexamer. Requires Mg(2+) as cofactor.

Its subcellular location is the cytoplasm. It catalyses the reaction (R)-4'-phosphopantetheine + ATP + H(+) = 3'-dephospho-CoA + diphosphate. It functions in the pathway cofactor biosynthesis; coenzyme A biosynthesis; CoA from (R)-pantothenate: step 4/5. Reversibly transfers an adenylyl group from ATP to 4'-phosphopantetheine, yielding dephospho-CoA (dPCoA) and pyrophosphate. In Acidiphilium cryptum (strain JF-5), this protein is Phosphopantetheine adenylyltransferase.